Here is a 174-residue protein sequence, read N- to C-terminus: Regulator of G-protein signaling 8 (174 aa).

The 117-residue stretch at Ser-46 to Leu-162 folds into the RGS domain.

It localises to the cell membrane. Its subcellular location is the membrane. The protein resides in the perikaryon. It is found in the cell projection. The protein localises to the dendrite. It localises to the nucleus. In terms of biological role, regulates G protein-coupled receptor signaling cascades, including signaling via muscarinic acetylcholine receptors and dopamine receptors. Inhibits signal transduction by increasing the GTPase activity of G protein alpha subunits, thereby driving them into their inactive GDP-bound form. Modulates the activity of potassium channels that are activated in response to G protein-coupled receptor signaling. This chain is Regulator of G-protein signaling 8 (rgs8), found in Danio rerio (Zebrafish).